We begin with the raw amino-acid sequence, 588 residues long: Aspartate--tRNA ligase (588 aa).

Glu174 provides a ligand contact to L-aspartate. An aspartate region spans residues 198 to 201 (QLFK). Arg220 is an L-aspartate binding site. ATP is bound by residues 220–222 (RDE) and Gln229. His448 is a binding site for L-aspartate. Glu482 is an ATP binding site. Arg489 is an L-aspartate binding site. 534 to 537 (GIDR) is a binding site for ATP.

The protein belongs to the class-II aminoacyl-tRNA synthetase family. Type 1 subfamily. As to quaternary structure, homodimer.

The protein resides in the cytoplasm. It carries out the reaction tRNA(Asp) + L-aspartate + ATP = L-aspartyl-tRNA(Asp) + AMP + diphosphate. Catalyzes the attachment of L-aspartate to tRNA(Asp) in a two-step reaction: L-aspartate is first activated by ATP to form Asp-AMP and then transferred to the acceptor end of tRNA(Asp). The sequence is that of Aspartate--tRNA ligase from Xanthomonas campestris pv. campestris (strain B100).